The chain runs to 207 residues: Imidazole glycerol phosphate synthase subunit HisH (207 aa).

In terms of domain architecture, Glutamine amidotransferase type-1 spans 1 to 207 (MIGIIDYGMG…KRFGQLVEGN (207 aa)). Cys-79 serves as the catalytic Nucleophile. Catalysis depends on residues His-185 and Glu-187.

In terms of assembly, heterodimer of HisH and HisF.

It is found in the cytoplasm. The enzyme catalyses 5-[(5-phospho-1-deoxy-D-ribulos-1-ylimino)methylamino]-1-(5-phospho-beta-D-ribosyl)imidazole-4-carboxamide + L-glutamine = D-erythro-1-(imidazol-4-yl)glycerol 3-phosphate + 5-amino-1-(5-phospho-beta-D-ribosyl)imidazole-4-carboxamide + L-glutamate + H(+). It carries out the reaction L-glutamine + H2O = L-glutamate + NH4(+). The protein operates within amino-acid biosynthesis; L-histidine biosynthesis; L-histidine from 5-phospho-alpha-D-ribose 1-diphosphate: step 5/9. Its function is as follows. IGPS catalyzes the conversion of PRFAR and glutamine to IGP, AICAR and glutamate. The HisH subunit catalyzes the hydrolysis of glutamine to glutamate and ammonia as part of the synthesis of IGP and AICAR. The resulting ammonia molecule is channeled to the active site of HisF. The sequence is that of Imidazole glycerol phosphate synthase subunit HisH from Shouchella clausii (strain KSM-K16) (Alkalihalobacillus clausii).